We begin with the raw amino-acid sequence, 237 residues long: tRNA-splicing endonuclease subunit Sen2-1 (237 aa).

Catalysis depends on residues Tyr148, His156, and Lys190.

It belongs to the tRNA-intron endonuclease family. In terms of assembly, tRNA splicing endonuclease is a heterotetramer composed of SEN2, SEN15, SEN34/LENG5 and SEN54.

Its subcellular location is the nucleus. The enzyme catalyses pretRNA = a 3'-half-tRNA molecule with a 5'-OH end + a 5'-half-tRNA molecule with a 2',3'-cyclic phosphate end + an intron with a 2',3'-cyclic phosphate and a 5'-hydroxyl terminus.. Its function is as follows. Constitutes one of the two catalytic subunit of the tRNA-splicing endonuclease complex, a complex responsible for identification and cleavage of the splice sites in pre-tRNA. It cleaves pre-tRNA at the 5'- and 3'-splice sites to release the intron. The products are an intron and two tRNA half-molecules bearing 2',3'-cyclic phosphate and 5'-OH termini. There are no conserved sequences at the splice sites, but the intron is invariably located at the same site in the gene, placing the splice sites an invariant distance from the constant structural features of the tRNA body. Probably carries the active site for 5'-splice site cleavage. This Arabidopsis thaliana (Mouse-ear cress) protein is tRNA-splicing endonuclease subunit Sen2-1 (SEN1).